Here is a 740-residue protein sequence, read N- to C-terminus: MLKLFSAFRKNKIWDFNGGIHPPEMKTQSNGTPLRQVPLAQRFVIPLKQHIGAEGELCVSVGDKVLRGQPLTRGRGKMLPVHAPTSGTVTAIAPHSTAHPSALAELSVIIDADGEDCWIPRDGWDDYRSRSREELIERIHQFGVAGLGGAGFPTGVKLQGGGDKIETLIINAAECEPYITADDRLMQDCAAQVVEGIRILAHILQPREILIGIEDNKPQAISMLRAVLADSHDITLRVIPTKYPSGGAKQLTYILTGKQVPHGGRSSDIGVLMQNVGTAYAVKRAVIDGEPITERVVTLTGEAIARPGNVWARLGTPVRHLLNDAGFCPSADQMVIMGGPLMGFTLPWLDVPVVKITNCLLAPSANELGEPQEEQSCIRCSACADACPADLLPQQLYWFSKGQQHDKATTHNIADCIECGACAWVCPSNIPLVQYFRQEKAEIAAIRQEEKRAAEAKARFEARQARLEREKAARLERHKSAAVQPAAKDKDAIAAALARVKEKQAQATQPIVIKAGERPDNSAIIAAREARKAQARAKQAELQQTNDAATVADPRKTAVEAAIARAKARKLEQQQANAEPEEQVDPRKAAVEAAIARAKARKLEQQQANAEPEQQVDPRKAAVEAAIARAKARKLEQQQANAEPEEQVDPRKAAVEAAIARAKARKLEQQQANAEPEEQVDPRKAAVEAAIARAKARKLEQQQANAEPEEQIDPRKAAVAAAIARVQAKKAAQQKVVNED.

2 consecutive 4Fe-4S ferredoxin-type domains span residues 369 to 397 (GEPQ…QQLY) and 407 to 436 (KATT…VQYF). [4Fe-4S] cluster-binding residues include Cys-377, Cys-380, Cys-383, Cys-387, Cys-416, Cys-419, Cys-422, and Cys-426. Residues 602-714 (KLEQQQANAE…NAEPEEQIDP (113 aa)) are disordered. The segment covering 605 to 615 (QQQANAEPEQQ) has biased composition (low complexity).

It belongs to the 4Fe4S bacterial-type ferredoxin family. RnfC subfamily. The complex is composed of six subunits: RsxA, RsxB, RsxC, RsxD, RsxE and RsxG. [4Fe-4S] cluster is required as a cofactor.

Its subcellular location is the cell inner membrane. Functionally, part of a membrane-bound complex that couples electron transfer with translocation of ions across the membrane. Required to maintain the reduced state of SoxR. This is Ion-translocating oxidoreductase complex subunit C from Escherichia coli O17:K52:H18 (strain UMN026 / ExPEC).